A 289-amino-acid chain; its full sequence is Thioredoxin-like protein 1 (289 aa).

The Thioredoxin domain maps to 2–109; that stretch reads VGVKPVGSDP…EEKIKQHLEN (108 aa). Cys-34 and Cys-37 form a disulfide bridge. The residue at position 113 (Ser-113) is a Phosphoserine. Residues 115–285 enclose the PITH domain; the sequence is EDADIPKGYM…NDFKRVVGKK (171 aa).

As to quaternary structure, component of the 19S regulatory cap of the 26S proteasome. Interacts with PSMD14/RPN11. Interacts with, and reduces EEF1A1.

The protein localises to the cytoplasm. The protein resides in the nucleus. Active thioredoxin with a redox potential of about -250 mV. This is Thioredoxin-like protein 1 (Txnl1) from Mus musculus (Mouse).